The primary structure comprises 316 residues: Iron-sulfur cluster assembly SufBD family protein MJ0034 (316 aa).

Belongs to the iron-sulfur cluster assembly SufBD family.

This Methanocaldococcus jannaschii (strain ATCC 43067 / DSM 2661 / JAL-1 / JCM 10045 / NBRC 100440) (Methanococcus jannaschii) protein is Iron-sulfur cluster assembly SufBD family protein MJ0034.